The following is a 1013-amino-acid chain: Alpha-2-macroglobulin homolog (1013 aa).

The interval 804–844 (AQRGANGERDGLRETVPVRPAGARQLLSGSGSVGADKAGGN) is disordered.

It belongs to the protease inhibitor I39 (alpha-2-macroglobulin) family. Bacterial alpha-2-macroglobulin subfamily.

The polypeptide is Alpha-2-macroglobulin homolog (Deinococcus radiodurans (strain ATCC 13939 / DSM 20539 / JCM 16871 / CCUG 27074 / LMG 4051 / NBRC 15346 / NCIMB 9279 / VKM B-1422 / R1)).